Consider the following 105-residue polypeptide: Membrane-stabilizing protein A (105 aa).

The helical transmembrane segment at 1 to 21 threads the bilayer; that stretch reads MQFYLILLAILYLIVSFISIF. The Cytoplasmic portion of the chain corresponds to 22-29; sequence KMEVVFTR. A helical transmembrane segment spans residues 30–50; it reads ILRIIMGVLLLFVLALTTMSF. Residues 51-55 are Extracellular-facing; sequence PKENW. The helical transmembrane segment at 56–76 threads the bilayer; the sequence is WVFIVLLLLVGNVEVTGFKML. Residues 77 to 84 lie on the Cytoplasmic side of the membrane; sequence KKDLKGVN. Residues 85 to 105 form a helical membrane-spanning segment; that stretch reads ILNLMSLFIFVIYFILTIVLF.

It belongs to the MspA family.

The protein localises to the membrane. In terms of biological role, plays a role in toxin production, resistance to host innate immune mechanisms, and iron homeostasis. The protein is Membrane-stabilizing protein A of Staphylococcus aureus (strain NCTC 8325 / PS 47).